The primary structure comprises 205 residues: Methylthioribulose-1-phosphate dehydratase (205 aa).

His-96 and His-98 together coordinate Zn(2+).

Belongs to the aldolase class II family. MtnB subfamily. The cofactor is Zn(2+).

The catalysed reaction is 5-(methylsulfanyl)-D-ribulose 1-phosphate = 5-methylsulfanyl-2,3-dioxopentyl phosphate + H2O. Its pathway is amino-acid biosynthesis; L-methionine biosynthesis via salvage pathway; L-methionine from S-methyl-5-thio-alpha-D-ribose 1-phosphate: step 2/6. Functionally, catalyzes the dehydration of methylthioribulose-1-phosphate (MTRu-1-P) into 2,3-diketo-5-methylthiopentyl-1-phosphate (DK-MTP-1-P). This is Methylthioribulose-1-phosphate dehydratase from Pseudomonas aeruginosa (strain ATCC 15692 / DSM 22644 / CIP 104116 / JCM 14847 / LMG 12228 / 1C / PRS 101 / PAO1).